Consider the following 455-residue polypeptide: Argininosuccinate lyase (455 aa).

It belongs to the lyase 1 family. Argininosuccinate lyase subfamily.

Its subcellular location is the cytoplasm. The enzyme catalyses 2-(N(omega)-L-arginino)succinate = fumarate + L-arginine. The protein operates within amino-acid biosynthesis; L-arginine biosynthesis; L-arginine from L-ornithine and carbamoyl phosphate: step 3/3. The chain is Argininosuccinate lyase from Shewanella sp. (strain ANA-3).